A 140-amino-acid polypeptide reads, in one-letter code: Sex-regulated protein janus-B (140 aa).

Arg42 contributes to the substrate binding site. The Proton acceptor role is filled by His69. 110-112 (SRT) serves as a coordination point for substrate.

The protein belongs to the janus family.

In terms of biological role, janA and janB regulate somatic sex differentiation. This Drosophila orena (Fruit fly) protein is Sex-regulated protein janus-B (janB).